The following is a 2641-amino-acid chain: CCR4-NOT transcription complex subunit let-711 (2641 aa).

The LXXLL signature appears at Leu-660–Leu-664. 5 disordered regions span residues Ser-771–Gln-887, Thr-936–Gln-963, Glu-1197–Ala-1221, Gln-1518–Ala-1565, and Gly-2034–Gln-2054. Composition is skewed to low complexity over residues Ser-774 to Gln-795, Leu-802 to Gln-839, and Pro-853 to Gly-877. Over residues Pro-951–Pro-960 the composition is skewed to pro residues. Residues Gly-1205–Ala-1221 show a composition bias toward low complexity. A compositionally biased stretch (low complexity) spans Gly-2034–Ala-2046. Positions Leu-2341 to Leu-2345 match the LXXLL motif. The segment at Ala-2609 to Asn-2641 is disordered.

This sequence belongs to the CNOT1 family. Component of the CCR4-NOT complex at least composed of ccf-1, ccr-4 and let-711, which is required for germ cell development in hermaphrodites. Within the complex interacts with ccf-1 and ccr-4; the interactions are direct. As to expression, highly expressed in the germline of hermaphrodites.

It localises to the nucleus. Its function is as follows. Scaffolding component of the CCR4-NOT complex which is one of the major cellular mRNA deadenylases and is linked to various cellular processes including bulk mRNA degradation, miRNA-mediated repression, translational repression during translational initiation and general transcription regulation. Positively regulates the accumulation of the CCR4-NOT complex component ccr-1. Within the complex promotes germ cell development and fertility in hermaphrodites. Additional complex functions may be a consequence of its influence on mRNA expression. Its scaffolding function implies its interaction with the catalytic complex module and diverse RNA-binding proteins mediating the complex recruitment to selected mRNA 3'UTRs. Mediates the recruitment of the CCR4-NOT complex to miRNA targets and to the RISC complex. Acts as a transcriptional repressor. Represses the ligand-dependent transcriptional activation by nuclear receptors. In embryos, plays a role in female pronucleus and mitotic spindle positioning during the first cleavage divisions after fertilization. This may partly be through negatively regulating the accumulation of zyg-9 at the centrosome. Negatively regulates the formation of long astral microtubules in developing embryos. Required for the stabilization and degradation of maternal mRNAs such as nos-2 in somatic blastomeres. The protein is CCR4-NOT transcription complex subunit let-711 of Caenorhabditis elegans.